Reading from the N-terminus, the 309-residue chain is Tagatose-6-phosphate kinase (309 aa).

This sequence belongs to the carbohydrate kinase PfkB family. LacC subfamily.

The enzyme catalyses D-tagatofuranose 6-phosphate + ATP = D-tagatofuranose 1,6-bisphosphate + ADP + H(+). It participates in carbohydrate metabolism; D-tagatose 6-phosphate degradation; D-glyceraldehyde 3-phosphate and glycerone phosphate from D-tagatose 6-phosphate: step 1/2. This chain is Tagatose-6-phosphate kinase, found in Streptococcus pneumoniae serotype 19F (strain G54).